Consider the following 631-residue polypeptide: tRNA uridine 5-carboxymethylaminomethyl modification enzyme MnmG (631 aa).

Residues 15-20, Ile-127, and Ser-182 each bind FAD; that span reads GAGHAG. An NAD(+)-binding site is contributed by 276-290; that stretch reads GPRYCPSIEDKIVRF. Gln-373 is an FAD binding site.

The protein belongs to the MnmG family. In terms of assembly, homodimer. Heterotetramer of two MnmE and two MnmG subunits. FAD is required as a cofactor.

Its subcellular location is the cytoplasm. Its function is as follows. NAD-binding protein involved in the addition of a carboxymethylaminomethyl (cmnm) group at the wobble position (U34) of certain tRNAs, forming tRNA-cmnm(5)s(2)U34. The chain is tRNA uridine 5-carboxymethylaminomethyl modification enzyme MnmG from Streptococcus mutans serotype c (strain ATCC 700610 / UA159).